We begin with the raw amino-acid sequence, 208 residues long: Thymidylate kinase (208 aa).

10–17 (GIDGCGKT) is a binding site for ATP.

It belongs to the thymidylate kinase family.

The enzyme catalyses dTMP + ATP = dTDP + ADP. Functionally, phosphorylation of dTMP to form dTDP in both de novo and salvage pathways of dTTP synthesis. In Caldanaerobacter subterraneus subsp. tengcongensis (strain DSM 15242 / JCM 11007 / NBRC 100824 / MB4) (Thermoanaerobacter tengcongensis), this protein is Thymidylate kinase.